A 439-amino-acid chain; its full sequence is CBL-interacting protein kinase 14 (439 aa).

The region spanning 12-267 (YELGRLLGKG…IQKIKESTWF (256 aa)) is the Protein kinase domain. ATP-binding positions include 18–26 (LGKGTFGKV) and Lys-41. Catalysis depends on Asp-135, which acts as the Proton acceptor. Positions 153–182 (DFGLSALSESKRQDGLLHTTCGTPAYVAPE) are activation loop. The 36-residue stretch at 298 to 333 (RKKNAHEDVKPMSVTNLNAFEIISFSKGFDLSGMFI) folds into the NAF domain. The PPI stretch occupies residues 338–367 (RNEARFTSDKSASTIISKLEDVAKALNLRV).

This sequence belongs to the protein kinase superfamily. CAMK Ser/Thr protein kinase family. SNF1 subfamily. Requires Mn(2+) as cofactor.

It catalyses the reaction L-seryl-[protein] + ATP = O-phospho-L-seryl-[protein] + ADP + H(+). It carries out the reaction L-threonyl-[protein] + ATP = O-phospho-L-threonyl-[protein] + ADP + H(+). Functionally, CIPK serine-threonine protein kinases interact with CBL proteins. Binding of a CBL protein to the regulatory NAF domain of CIPK protein lead to the activation of the kinase in a calcium-dependent manner. This is CBL-interacting protein kinase 14 (CIPK14) from Oryza sativa subsp. japonica (Rice).